A 160-amino-acid chain; its full sequence is Nucleotide-binding protein PSHAa2277 (160 aa).

This sequence belongs to the YajQ family.

Its function is as follows. Nucleotide-binding protein. This Pseudoalteromonas translucida (strain TAC 125) protein is Nucleotide-binding protein PSHAa2277.